The following is a 396-amino-acid chain: Elongation factor Tu (396 aa).

The region spanning 10 to 205 (KPHVNIGTIG…ACDDNIPDPV (196 aa)) is the tr-type G domain. The G1 stretch occupies residues 19–26 (GHVDHGKT). 19 to 26 (GHVDHGKT) serves as a coordination point for GTP. Thr-26 is a binding site for Mg(2+). A G2 region spans residues 62–66 (GITIN). The tract at residues 83-86 (DAPG) is G3. GTP is bound by residues 83-87 (DAPGH) and 138-141 (NKCD). Residues 138-141 (NKCD) form a G4 region. Positions 175-177 (SAL) are G5.

This sequence belongs to the TRAFAC class translation factor GTPase superfamily. Classic translation factor GTPase family. EF-Tu/EF-1A subfamily. As to quaternary structure, monomer.

Its subcellular location is the cytoplasm. It catalyses the reaction GTP + H2O = GDP + phosphate + H(+). In terms of biological role, GTP hydrolase that promotes the GTP-dependent binding of aminoacyl-tRNA to the A-site of ribosomes during protein biosynthesis. The polypeptide is Elongation factor Tu (Corynebacterium glutamicum (strain R)).